We begin with the raw amino-acid sequence, 87 residues long: Putative protein KleG (87 aa).

Disordered regions lie at residues 1-23 and 61-87; these read MRHS…WPSS and IPTT…IFSR. Residues 68–78 show a composition bias toward basic residues; sequence RGRRPQRHRPS.

The protein is Putative protein KleG (kleG) of Escherichia coli.